Here is a 1215-residue protein sequence, read N- to C-terminus: MIDVNNFESMEIGLASPMKIRSWSYGEVTKPETINYRTLKPEKDGLFDERIFGPTKDFECACGRYKRARYNKRVCERCGVEVTSAKVRRERMGHIELAAPASHIWYFKGIPSRMGLVLDMSPRELEEVIYFASYVVLDAGDTGLEKKQLLSEPRYRELKEEYGNRFTAEMGAEAIQKLLADVDLAKEATELKAVLKEATGQKRTRAVRRLDILEAFLKSGNKPEWMVMDVIPVMPPDLRPMVQLEGGRFATSDLNDLYRRVINRNNRLKRLLELNAPGIIVQNEKRMLQEAVDALIDNGRRGRPVAGPGNRPLKSLSHLLKGKQGRFRQNLLGKRVDYSGRSVIDVGPSMKMNQMGLPVPMAMELFKPFIIHELTKRNLATNVKAAKRMIDKRDEKVFDVLEDVIKEHPVLLNRAPTLHRLGIQAFEPILVSGKAMRLHPLVCAAYNADFDGDQMAIHVPLSDEAQAEARLLMLAAHHILSPRDGEPIVAPSQDMVIGNYYMTTEDKAREGEGMIFKDTNEARMAYRNGYVALQTRVGVLTSSFDKKPFTAEQRQKIMVTSVGKLLFNNIMPEDYTYINEPTADNLQNGVPDKYFLEPGEDIHAYLENAPLVPPFKKGFLSDIIADVYKIYKVTVTSQLLDRIKDLGYYESTISGLTVGIADVTDLKEKPEIIEKAHKQVALVTKQFRRGLITDNERYERVIGIWNDAKDEVQNKLIEHMDIHNPINMMSDSGARGNISNFTQLAGMRGLMASPSGKIMELPILSNFREGLSVLEMFISSHGARKGMTDTALKTANSGYLTRRLVDVAQDVIVREKDCGTDRGLEVTAITNGNEMIEPLYDRILGRYTMKSVFNPETGEKIVGKNVLLNEEMAQKIIDAGVQKVTIRSAFTCNTEHGVCERCYGRNAATGDQVEAGEAIGTVAAQSIGEPGTQLTLRNFHTGGVAGNDDITQGLPRIQEIVESRNPKGKATISEVTGQVVSIEENPAEQTKDVTIKGETDTRTYTLPITARIRVAEGDDIHRGRAINEGSIDPKEMIRVRDVLSTETYLLSEVQNVYRMQGIDLLDKHVEIMIRQMMRKVRVMDPGDTDVLPGELLDISQFRDANYQTLISGGIPATARPVILGITKAALETNSFLSAASFQETTRVLTDAAIRGKNDPLVGLKENVIIGKIIPAGTGMGAYRNIKPKEVSVNTGATDGAITSIREMEEQLKDQD.

Zn(2+)-binding residues include Cys-60, Cys-62, Cys-75, and Cys-78. Residues Asp-449, Asp-451, and Asp-453 each contribute to the Mg(2+) site. The Zn(2+) site is built by Cys-818, Cys-892, Cys-899, and Cys-902.

It belongs to the RNA polymerase beta' chain family. In terms of assembly, the RNAP catalytic core consists of 2 alpha, 1 beta, 1 beta' and 1 omega subunit. When a sigma factor is associated with the core the holoenzyme is formed, which can initiate transcription. Mg(2+) serves as cofactor. It depends on Zn(2+) as a cofactor.

The catalysed reaction is RNA(n) + a ribonucleoside 5'-triphosphate = RNA(n+1) + diphosphate. Functionally, DNA-dependent RNA polymerase catalyzes the transcription of DNA into RNA using the four ribonucleoside triphosphates as substrates. The polypeptide is DNA-directed RNA polymerase subunit beta' (Limosilactobacillus fermentum (strain NBRC 3956 / LMG 18251) (Lactobacillus fermentum)).